A 341-amino-acid chain; its full sequence is Phosphate acyltransferase (341 aa).

The protein belongs to the PlsX family. As to quaternary structure, homodimer. Probably interacts with PlsY.

It localises to the cytoplasm. It catalyses the reaction a fatty acyl-[ACP] + phosphate = an acyl phosphate + holo-[ACP]. The protein operates within lipid metabolism; phospholipid metabolism. Functionally, catalyzes the reversible formation of acyl-phosphate (acyl-PO(4)) from acyl-[acyl-carrier-protein] (acyl-ACP). This enzyme utilizes acyl-ACP as fatty acyl donor, but not acyl-CoA. The chain is Phosphate acyltransferase from Vibrio cholerae serotype O1 (strain ATCC 39541 / Classical Ogawa 395 / O395).